A 436-amino-acid chain; its full sequence is DEAD-box ATP-dependent RNA helicase CshB (436 aa).

Residues 4–32 (QTFTQYDFKPFLIDAVRELRFTEPTGIQQ) carry the Q motif motif. The Helicase ATP-binding domain maps to 35 to 209 (FPVVKKGVSV…KKYMENPEHI (175 aa)). 48-55 (SQTGSGKT) lines the ATP pocket. The DEAD box signature appears at 157-160 (DEAD). A Helicase C-terminal domain is found at 240-388 (MLLQFKPYLA…WADLGERRRR (149 aa)). The disordered stretch occupies residues 385-436 (RRRRKSRKKPNDELDVMATKVIKKPKKVKPNYKRKLATERDKVKRKYSNKKR). Basic residues-rich tracts occupy residues 405-419 (VIKK…YKRK) and 427-436 (VKRKYSNKKR).

The protein belongs to the DEAD box helicase family. CshB subfamily.

Its subcellular location is the cytoplasm. It catalyses the reaction ATP + H2O = ADP + phosphate + H(+). In terms of biological role, probable DEAD-box RNA helicase. May work in conjunction with the cold shock proteins to ensure proper initiation of transcription at low and optimal temperatures. Unwinds dsRNA in both 5'- and 3'-directions and shows RNA-dependent ATPase activity. Probably has a somewhat redundant function with CshA, as cshA can partially complement the growth effects of a cshB deletion. This Bacillus cereus (strain ATCC 14579 / DSM 31 / CCUG 7414 / JCM 2152 / NBRC 15305 / NCIMB 9373 / NCTC 2599 / NRRL B-3711) protein is DEAD-box ATP-dependent RNA helicase CshB.